Consider the following 432-residue polypeptide: Cyclic GMP-AMP synthase (432 aa).

110 to 115 (QGSFQY) lines the GTP pocket. The Mg(2+) site is built by Asp129 and Asp131. Arg180 lines the ATP pocket. Asp191 provides a ligand contact to Mg(2+). Residue Ser255 participates in ATP binding. GTP contacts are provided by Lys283, Ser297, and Asp344. The tract at residues 413–432 (LNAPSKEPSSKPINKTMVSG) is disordered. Residues 423-432 (KPINKTMVSG) show a composition bias toward polar residues.

It belongs to the CD-NTase family. A01 subfamily. It depends on Mg(2+) as a cofactor.

It catalyses the reaction GTP + ATP = 3',3'-cGAMP + 2 diphosphate. Functionally, cyclic nucleotide synthase (second messenger synthase) of a CBASS antivirus system. CBASS (cyclic oligonucleotide-based antiphage signaling system) provides immunity against bacteriophage. The CD-NTase protein synthesizes cyclic nucleotides in response to infection; these serve as specific second messenger signals. The signals activate a diverse range of effectors, leading to bacterial cell death and thus abortive phage infection. A type II-C(GA) CBASS system. In terms of biological role, catalyzes the synthesis of 3'3'-cyclic GMP-AMP (3'3'-cGAMP) from GTP and ATP, a second messenger in cell signal transduction. Is also able to produce c-di-AMP and c-di-GMP from ATP and GTP, respectively; however, 3'3'-cGAMP is the dominant molecule produced by DncV in vivo, contrary to the 2'3'-cGAMP produced by eukaryotes. By producing cGAMP, down-regulates csgD expression and expression of flagellum regulon genes, which leads to the down-regulation of rdar biofilm formation and flagellum-mediated swimming and swarming motility in a temperature-dependent manner. Controls the activity of cGAMP-activated phospholipase CapV, a patatin-like lipase that is a direct 3',3'-cGAMP receptor encoded in the dncV operon. This chain is Cyclic GMP-AMP synthase, found in Escherichia coli.